The chain runs to 251 residues: MRRPMVAGNWKMHGTRASVAELTEGLSNLALPSGVEVAVFPPALFINQVIDGLAGKEITVGAQNSAVQPEQGALTGEVAPEQLVEAGCKLVLIGHSERRQVIGETDEVLNRKFAAAQAKGLKPVLCIGETLEEREAGKTLEVVGRQLSSIIEAFGVKAFANAVIAYEPVWAIGTGLTATPQQAQDVHAAIRGQLAAEDAEVAAKVQLLYGGSVKAANAAELFGMPDIDGGLIGGASLNADEFGAICRAAGN.

9–11 provides a ligand contact to substrate; that stretch reads NWK. The Electrophile role is filled by His95. Glu167 serves as the catalytic Proton acceptor. Residues Gly173, Ser212, and 233–234 each bind substrate; that span reads GG.

The protein belongs to the triosephosphate isomerase family. Homodimer.

The protein resides in the cytoplasm. It catalyses the reaction D-glyceraldehyde 3-phosphate = dihydroxyacetone phosphate. Its pathway is carbohydrate biosynthesis; gluconeogenesis. It participates in carbohydrate degradation; glycolysis; D-glyceraldehyde 3-phosphate from glycerone phosphate: step 1/1. In terms of biological role, involved in the gluconeogenesis. Catalyzes stereospecifically the conversion of dihydroxyacetone phosphate (DHAP) to D-glyceraldehyde-3-phosphate (G3P). The sequence is that of Triosephosphate isomerase from Pseudomonas putida (strain GB-1).